The primary structure comprises 430 residues: Levansucrase Lscgamma (430 aa).

Tryptophan 60, aspartate 61, alanine 147, arginine 217, and aspartate 218 together coordinate sucrose. The active-site Nucleophile is aspartate 61. Glutamate 302 acts as the Proton donor/acceptor in catalysis.

This sequence belongs to the glycosyl hydrolase 68 family. As to quaternary structure, homodimer.

The catalysed reaction is [6)-beta-D-fructofuranosyl-(2-&gt;](n) alpha-D-glucopyranoside + sucrose = [6)-beta-D-fructofuranosyl-(2-&gt;](n+1) alpha-D-glucopyranoside + D-glucose. With respect to regulation, sucrose hydrolase activity is negatively affected by salt concentration. The levan polymerization rate increases sharply in relation to sucrose concentration reaching the maximum at 100 mM sucrose, and then steadily decreases, suggesting a strong inhibition of the activity by the substrate. Functionally, catalyzes the synthesis of levan, a fructose polymer, by transferring the fructosyl moiety from sucrose to a growing acceptor molecule. Also displays sucrose hydrolase activity. Can depolymerize the levan produced once substrate is completely exhausted. The chain is Levansucrase Lscgamma from Pseudomonas syringae pv. actinidiae.